The chain runs to 197 residues: MFGGNMRIFEVMRETKETNIYLKINIDGTGKYKIDTGIPFFDHLLASFAKHGCFDLIVKARGDLEIDDHHTVEDVGICLGLALNQIEKRNIFRFGWAIIPMDDARATVAIDLSGRSYCVGNYEPKREFVGDLATENINHFFESVASYGMLNIHYEVIGKNEHHKAEALFKAFGVALDLATKIDERKGVISTKGEVKL.

This sequence belongs to the imidazoleglycerol-phosphate dehydratase family.

It localises to the cytoplasm. It catalyses the reaction D-erythro-1-(imidazol-4-yl)glycerol 3-phosphate = 3-(imidazol-4-yl)-2-oxopropyl phosphate + H2O. Its pathway is amino-acid biosynthesis; L-histidine biosynthesis; L-histidine from 5-phospho-alpha-D-ribose 1-diphosphate: step 6/9. The sequence is that of Imidazoleglycerol-phosphate dehydratase from Methanocaldococcus jannaschii (strain ATCC 43067 / DSM 2661 / JAL-1 / JCM 10045 / NBRC 100440) (Methanococcus jannaschii).